A 63-amino-acid polypeptide reads, in one-letter code: Lantipeptide Flvbeta.a (63 aa).

The propeptide at 1–28 is cleaved by FlvT; it reads MSEKNMEKAGVVKADELDEMIDETTGGA. 2,3-didehydrobutyrine; by FlvM2 occurs at positions 30, 33, 38, and 39. Positions 43 to 49 form a cross-link, lanthionine (Ser-Cys); by FlvM2; that stretch reads SKGLQNC. 2 positions are modified to 2,3-didehydrobutyrine; by FlvM2: T54 and T55.

In terms of processing, maturation of FlvA2 peptides involves the enzymatic conversion of Thr, and Ser into dehydrated AA and the formation of thioether bonds with cysteines. Modifications are processed by the flavecin synthetase FlvM2. This is followed by membrane translocation and cleavage of the modified precursor. Post-translationally, contains DL-lanthionine, when coepressed in E.coli with the flavecin synthetase FlvM2.

The protein localises to the secreted. Functionally, lanthionine-containing peptide that does probably not show antibacterial activity, since its analog [+3]Flvbeta.a does not show antibacterial activity against M.luteus. Also does not show antibiotic activity when tested with [Del2]Flvalpha.a, an analog of Flvalpha.a, which is encoded by the same operon than Flvbeta.a. The bactericidal activity of lantibiotics is based on depolarization of energized bacterial cytoplasmic membranes, initiated by the formation of aqueous transmembrane pores. The chain is Lantipeptide Flvbeta.a from Ruminococcus flavefaciens.